The sequence spans 194 residues: dCTP deaminase (194 aa).

DCTP-binding positions include 110–115 (RSSLAR), D128, 136–138 (VLE), Y171, K178, and Q182. Residue E138 is the Proton donor/acceptor of the active site.

It belongs to the dCTP deaminase family. As to quaternary structure, homotrimer.

The enzyme catalyses dCTP + H2O + H(+) = dUTP + NH4(+). Its pathway is pyrimidine metabolism; dUMP biosynthesis; dUMP from dCTP (dUTP route): step 1/2. Its function is as follows. Catalyzes the deamination of dCTP to dUTP. This is dCTP deaminase from Histophilus somni (strain 2336) (Haemophilus somnus).